The chain runs to 247 residues: MAGHSKWANIKRHKWAQDAKRSKIFTKHIREITVAARLGGPDPEMNARLRLALDRAFAVNLPKDRADAAIKKGAGLEEAEAYEEIRYEGYGPGGSAIMVDCMTDNRNRTVSEVRHAFSKHGGKMGTDNSVAYLFQERGVLVFAPGTDSDQVLEVALEAGADDLVENDDGSLEVLTTPEAYRGVRDALTEAGLEPEQADVTQRPDLTVQIEGDNAVSTARLIERLEDLDDVQHVYTNADLPAEAYEEG.

Belongs to the TACO1 family.

It localises to the cytoplasm. This chain is Probable transcriptional regulatory protein Hhal_2210, found in Halorhodospira halophila (strain DSM 244 / SL1) (Ectothiorhodospira halophila (strain DSM 244 / SL1)).